A 786-amino-acid chain; its full sequence is LPS-assembly protein LptD (786 aa).

The signal sequence occupies residues 1-24 (MSFTSRSLLASFTGCLLYGTPAIA).

This sequence belongs to the LptD family. Component of the lipopolysaccharide transport and assembly complex. Interacts with LptE and LptA.

It is found in the cell outer membrane. In terms of biological role, together with LptE, is involved in the assembly of lipopolysaccharide (LPS) at the surface of the outer membrane. The protein is LPS-assembly protein LptD of Aliivibrio fischeri (strain ATCC 700601 / ES114) (Vibrio fischeri).